The chain runs to 1154 residues: Diacylglycerol kinase eta (1154 aa).

Residues 1–54 are disordered; the sequence is MAGAGYQHHPPGGAAVGTSAVSPTAAGPGEDSSDSEAEQGGPQKLIRKVSTSGQ. One can recognise a PH domain in the interval 59–152; sequence TSIKEGQLLK…WISSLKSVQS (94 aa). Phorbol-ester/DAG-type zinc fingers lie at residues 169–219 and 241–292; these read MHNW…TNNC and PHQW…HPVC. Positions 322–457 constitute a DAGKc domain; sequence FCVSPLLVFV…LDRWSIMTYE (136 aa). 3 disordered regions span residues 560–608, 634–678, and 1123–1154; these read QASR…AVKP, DEQT…APEA, and FKME…SPGN. Over residues 573–586 the composition is skewed to acidic residues; the sequence is PEEDAVESSSEESL. Residues 656–667 show a composition bias toward basic and acidic residues; the sequence is DDSKDNDTKESP. Over residues 1131 to 1154 the composition is skewed to polar residues; sequence QKTSSQPGPGDTESGSYEANSPGN.

It belongs to the eukaryotic diacylglycerol kinase family. Interacts with RAF1 and BRAF. Post-translationally, phosphorylated. Phosphorylation does not inhibit catalytic activity. As to expression, expressed in a wide variety of tissues. Most abundant in the brain and testis; also found in lung, spleen, and prostate (at protein level).

It localises to the cytoplasm. It is found in the cell membrane. It carries out the reaction a 1,2-diacyl-sn-glycerol + ATP = a 1,2-diacyl-sn-glycero-3-phosphate + ADP + H(+). The catalysed reaction is 1,2-di-(9Z-octadecenoyl)-sn-glycerol + ATP = 1,2-di-(9Z-octadecenoyl)-sn-glycero-3-phosphate + ADP + H(+). The protein operates within lipid metabolism; glycerolipid metabolism. Its function is as follows. Diacylglycerol kinase that converts diacylglycerol/DAG into phosphatidic acid/phosphatidate/PA and regulates the respective levels of these two bioactive lipids. Thereby, acts as a central switch between the signaling pathways activated by these second messengers with different cellular targets and opposite effects in numerous biological processes. Plays a key role in promoting cell growth. Activates the Ras/B-Raf/C-Raf/MEK/ERK signaling pathway induced by EGF. Regulates the recruitment of RAF1 and BRAF from cytoplasm to membranes and their heterodimerization. This is Diacylglycerol kinase eta (DGKH) from Mesocricetus auratus (Golden hamster).